Consider the following 96-residue polypeptide: UPF0251 protein Spea_3639 (96 aa).

Belongs to the UPF0251 family.

The chain is UPF0251 protein Spea_3639 from Shewanella pealeana (strain ATCC 700345 / ANG-SQ1).